A 197-amino-acid polypeptide reads, in one-letter code: Na(+)-translocating NADH-quinone reductase subunit E (197 aa).

Transmembrane regions (helical) follow at residues 11–31 (SVFI…FLAV), 35–55 (VSTA…SVPV), 76–96 (FLKF…LEMF), 108–128 (LGIY…VSFM), 139–159 (VVYG…LAGI), and 175–195 (LGIT…FSGI).

Belongs to the NqrDE/RnfAE family. In terms of assembly, composed of six subunits; NqrA, NqrB, NqrC, NqrD, NqrE and NqrF.

The protein localises to the cell inner membrane. It catalyses the reaction a ubiquinone + n Na(+)(in) + NADH + H(+) = a ubiquinol + n Na(+)(out) + NAD(+). NQR complex catalyzes the reduction of ubiquinone-1 to ubiquinol by two successive reactions, coupled with the transport of Na(+) ions from the cytoplasm to the periplasm. NqrA to NqrE are probably involved in the second step, the conversion of ubisemiquinone to ubiquinol. This Neisseria meningitidis serogroup B (strain ATCC BAA-335 / MC58) protein is Na(+)-translocating NADH-quinone reductase subunit E.